The sequence spans 249 residues: Long form salivary protein D7L (249 aa).

Residues 1–19 (MNAVITSLVFISLVGVGYS) form the signal peptide. 2 cysteine pairs are disulfide-bonded: C36–C66 and C62–C112. Residue W49 coordinates thromboxane A2. Position 52 (W52) interacts with leukotriene C4. A thromboxane A2-binding site is contributed by Y63. Leukotriene C4 is bound by residues G136 and K154. Residue K154 coordinates thromboxane A2. Cystine bridges form between C162-C178, C174-C221, and C211-C230.

It belongs to the PBP/GOBP family.

It is found in the secreted. Modulates blood feeding of female sandflies on vertebrate species by binding and sequestering different mediators involved in the host response. Binds leukotriene C4, leukotriene D4, leukotriene E4 and U-46619, a stable analog of thromboxane A2. Does not bind histamine or serotonin. Inhibits platelet aggregation induced by low concentrations of collagen in thromboxane A2-dependent manner. This is Long form salivary protein D7L from Phlebotomus duboscqi (Sandfly).